A 250-amino-acid polypeptide reads, in one-letter code: Uracil-DNA glycosylase (250 aa).

Residue aspartate 78 is the Proton acceptor of the active site. The tract at residues 228 to 250 (RGQKPVDWSGEQNNASRQGEFAL) is disordered.

It belongs to the uracil-DNA glycosylase (UDG) superfamily. UNG family.

Its subcellular location is the cytoplasm. It catalyses the reaction Hydrolyzes single-stranded DNA or mismatched double-stranded DNA and polynucleotides, releasing free uracil.. In terms of biological role, excises uracil residues from the DNA which can arise as a result of misincorporation of dUMP residues by DNA polymerase or due to deamination of cytosine. The polypeptide is Uracil-DNA glycosylase (Bordetella parapertussis (strain 12822 / ATCC BAA-587 / NCTC 13253)).